The chain runs to 124 residues: Fluoride-specific ion channel FluC (124 aa).

Transmembrane regions (helical) follow at residues 1-21 (MLNT…RYGV), 36-56 (TMII…WFVV), 70-90 (TGIL…FLLI), and 100-120 (LYVI…FAII). 2 residues coordinate Na(+): G74 and T77.

Belongs to the fluoride channel Fluc/FEX (TC 1.A.43) family.

The protein localises to the cell inner membrane. It catalyses the reaction fluoride(in) = fluoride(out). Its activity is regulated as follows. Na(+) is not transported, but it plays an essential structural role and its presence is essential for fluoride channel function. Fluoride-specific ion channel. Important for reducing fluoride concentration in the cell, thus reducing its toxicity. This chain is Fluoride-specific ion channel FluC, found in Methylobacterium sp. (strain 4-46).